A 178-amino-acid chain; its full sequence is Hypoxanthine-guanine phosphoribosyltransferase (178 aa).

Lys46 and Gly47 together coordinate diphosphate. Mg(2+) is bound at residue Asp103. Asp106 (proton acceptor) is an active-site residue. GMP-binding positions include Lys134, 155–156 (FL), and Asp162. Arg168 is a binding site for diphosphate.

Belongs to the purine/pyrimidine phosphoribosyltransferase family. The cofactor is Mg(2+).

The protein localises to the cytoplasm. The catalysed reaction is IMP + diphosphate = hypoxanthine + 5-phospho-alpha-D-ribose 1-diphosphate. It carries out the reaction GMP + diphosphate = guanine + 5-phospho-alpha-D-ribose 1-diphosphate. Its pathway is purine metabolism; IMP biosynthesis via salvage pathway; IMP from hypoxanthine: step 1/1. The protein operates within purine metabolism; GMP biosynthesis via salvage pathway; GMP from guanine: step 1/1. Its function is as follows. Purine salvage pathway enzyme that catalyzes the transfer of the ribosyl-5-phosphate group from 5-phospho-alpha-D-ribose 1-diphosphate (PRPP) to the N9 position of the 6-oxopurines hypoxanthine and guanine to form the corresponding ribonucleotides IMP (inosine 5'-monophosphate) and GMP (guanosine 5'-monophosphate), with the release of PPi. In Aquifex aeolicus (strain VF5), this protein is Hypoxanthine-guanine phosphoribosyltransferase (hpt).